Reading from the N-terminus, the 521-residue chain is Cytochrome P450 monooxygenase bet2 (521 aa).

Residues 23-43 (SNWRFALFVAATLLTSYIVIV) traverse the membrane as a helical segment. The N-linked (GlcNAc...) asparagine glycan is linked to N188. C461 is a heme binding site.

The protein belongs to the cytochrome P450 family. Requires heme as cofactor.

Its subcellular location is the membrane. It catalyses the reaction dehydroprobetaenone I + NADPH + O2 + H(+) = epoxybetaenone + NADP(+) + H2O. The catalysed reaction is dehydroprobetaenone I + 3 NADPH + 3 O2 + 3 H(+) = betaenone C + 3 NADP(+) + 3 H2O. Its pathway is mycotoxin biosynthesis. In terms of biological role, cytochrome P450 monooxygenase; part of the gene cluster that mediates the biosynthesis of betaenones, phytotoxic polyketides involved in leaf spot disease in sugar beets. The first step of the pathway is the synthesis of dehydroprobetaenone I by the polyketide synthase bet1 and the enoyl reductase bet3 via condensation of one acetyl-CoA starter unit with 7 malonyl-CoA units and 5 methylations. The C-terminal reductase (R) domain of bet1 catalyzes the reductive release of the polyketide chain. Because bet1 lacks a designated enoylreductase (ER) domain, the required activity is provided the enoyl reductase bet3. The short-chain dehydrogenase/reductase bet4 then catalyzes reduction of dehydroprobetaenone I to probetaenone I. The cytochrome P450 monooxygenase bet2 catalyzes successive epoxidation, oxidation (resulting from epoxide opening) and hydroxylation to install a tertiary alcohol in the decaline ring to yield betaenone C from dehydroprobetaenone I and betaenone B from probetaenone I. The FAD-linked oxidoreductase (orf1) is probably responsible for the conversion of betaenone C to betaenone A via an intramolecular aldol reaction between C-1 and C-17 to form the bridged tricyclic system in betaenone A. The protein is Cytochrome P450 monooxygenase bet2 of Neocamarosporium betae (Beet black rot fungus).